We begin with the raw amino-acid sequence, 491 residues long: 2,3-bisphosphoglycerate-independent phosphoglycerate mutase (491 aa).

Residues D11 and S61 each coordinate Mn(2+). S61 serves as the catalytic Phosphoserine intermediate. Residues H118, 147-148, R177, R183, 247-250, and K320 each bind substrate; these read RD and RNDR. Mn(2+) is bound by residues D386, H390, D427, H428, and H445.

This sequence belongs to the BPG-independent phosphoglycerate mutase family. In terms of assembly, monomer. Mn(2+) is required as a cofactor.

The enzyme catalyses (2R)-2-phosphoglycerate = (2R)-3-phosphoglycerate. The protein operates within carbohydrate degradation; glycolysis; pyruvate from D-glyceraldehyde 3-phosphate: step 3/5. In terms of biological role, catalyzes the interconversion of 2-phosphoglycerate and 3-phosphoglycerate. This chain is 2,3-bisphosphoglycerate-independent phosphoglycerate mutase, found in Helicobacter pylori (strain ATCC 700392 / 26695) (Campylobacter pylori).